The chain runs to 237 residues: Phosphoribosylaminoimidazole-succinocarboxamide synthase (237 aa).

This sequence belongs to the SAICAR synthetase family.

It carries out the reaction 5-amino-1-(5-phospho-D-ribosyl)imidazole-4-carboxylate + L-aspartate + ATP = (2S)-2-[5-amino-1-(5-phospho-beta-D-ribosyl)imidazole-4-carboxamido]succinate + ADP + phosphate + 2 H(+). It functions in the pathway purine metabolism; IMP biosynthesis via de novo pathway; 5-amino-1-(5-phospho-D-ribosyl)imidazole-4-carboxamide from 5-amino-1-(5-phospho-D-ribosyl)imidazole-4-carboxylate: step 1/2. This chain is Phosphoribosylaminoimidazole-succinocarboxamide synthase, found in Halalkalibacterium halodurans (strain ATCC BAA-125 / DSM 18197 / FERM 7344 / JCM 9153 / C-125) (Bacillus halodurans).